The following is a 725-amino-acid chain: Homeobox-leucine zipper protein HDG3 (725 aa).

Positions 1–74 are disordered; it reads MSQSNMVPVA…PRHKKKKYNR (74 aa). Positions 11 to 40 are enriched in low complexity; the sequence is NNGDNNNDNENNNNNNNNGGTDNTNAGNDS. Residues 46–64 show a composition bias toward polar residues; the sequence is DSGNTSSGNHGEGLGNNQA. Basic residues predominate over residues 65 to 74; it reads PRHKKKKYNR. Residues 68–127 constitute a DNA-binding region (homeobox); the sequence is KKKKYNRHTQLQISEMEAFFRECPHPDDKQRYDLSAQLGLDPVQIKFWFQNKRTQNKNQQ. A coiled-coil region spans residues 117-201; it reads QNKRTQNKNQ…SVTAEKISRL (85 aa). The 233-residue stretch at 243-475 folds into the START domain; sequence DANTKPIIME…LVRQCERISS (233 aa).

The protein belongs to the HD-ZIP homeobox family. Class IV subfamily. Interacts with AIL7/PLT7, ANT, BBM and AIL1. Expressed in siliques.

The protein resides in the nucleus. Probable transcription factor. Seems to promote cell differentiation. The protein is Homeobox-leucine zipper protein HDG3 of Arabidopsis thaliana (Mouse-ear cress).